A 568-amino-acid polypeptide reads, in one-letter code: MARVEL domain-containing protein 2 (568 aa).

Disordered stretches follow at residues 1–72 (MSGG…YPSD) and 116–163 (SGGV…SYNS). The Cytoplasmic portion of the chain corresponds to 1-211 (MSGGGSSSGP…YMKSWAGLLR (211 aa)). Positions 29–46 (ADPRHPETNLETLHDRDL) are enriched in basic and acidic residues. The span at 52-62 (PLPPPPLPLHP) shows a compositional bias: pro residues. The MARVEL domain occupies 205–379 (SWAGLLRILC…SAMVSLKLWR (175 aa)). A helical membrane pass occupies residues 212–232 (ILCIVELLLGAAVFACVTAYI). The Extracellular segment spans residues 233 to 266 (HKDNEWYNMFGYSQPYGYTASMQGGYYYSGPKTP). The helical transmembrane segment at 267–287 (FVLVVAGLAWIVTIILLVLGM) threads the bilayer. At 288-303 (SMYYRTILLDSTWWPL) the chain is on the cytoplasmic side. Residues 304–324 (TEFGINISLFILYMAGAIVYV) traverse the membrane as a helical segment. Topologically, residues 325-354 (NDTNRGGLCYYQLFNTPVNASFCRVEGGQT) are extracellular. Residues 355-375 (AAIIFLFVSMLMYFISAMVSL) form a helical membrane-spanning segment. Over 376-568 (KLWRHESARK…KVMDWNDGYN (193 aa)) the chain is Cytoplasmic. Residues 451–562 (PDYVAKYQAI…RIQEYDKVMD (112 aa)) form the OCEL domain. Residues 462–559 (AEDERERYKA…IKQRIQEYDK (98 aa)) are a coiled coil.

The protein belongs to the ELL/occludin family.

It localises to the cell membrane. It is found in the cell junction. The protein resides in the tight junction. In terms of biological role, may play a role in the formation of the epithelial barrier. This is MARVEL domain-containing protein 2 (marveld2) from Xenopus tropicalis (Western clawed frog).